A 90-amino-acid chain; its full sequence is [Phe8]-phyllolitorin (90 aa).

An N-terminal signal peptide occupies residues 1-30; sequence MSAVPFTRVLLISGFLAHLLLSTFVTLTVC. The propeptide occupies 31-48; sequence KEVTEESDDLSKRNVLQR. Q49 carries the post-translational modification Pyrrolidone carboxylic acid. A Methionine amide modification is found at M57. Residues 61 to 90 constitute a propeptide that is removed on maturation; that stretch reads SLENTNRRSDEDMEISALFRGSPLKVKRSD.

This sequence belongs to the bombesin/neuromedin-B/ranatensin family. As to expression, expressed by the skin glands.

The protein resides in the secreted. The chain is [Phe8]-phyllolitorin from Phyllomedusa sauvagei (Sauvage's leaf frog).